The primary structure comprises 400 residues: Deoxyguanosinetriphosphate triphosphohydrolase-like protein (400 aa).

The region spanning 76–204 (RLTHTLEVAQ…VNIADPLAYC (129 aa)) is the HD domain.

This sequence belongs to the dGTPase family. Type 2 subfamily.

The protein is Deoxyguanosinetriphosphate triphosphohydrolase-like protein of Syntrophus aciditrophicus (strain SB).